The following is an 80-amino-acid chain: MSNKGQLLQDPFLNALRKEHVPVSIYLVNGIKLQGNIESFDQYVVLLRNTVTQMVYKHAISTVVPARPVNFHPDAEATTS.

One can recognise a Sm domain in the interval 10 to 69 (DPFLNALRKEHVPVSIYLVNGIKLQGNIESFDQYVVLLRNTVTQMVYKHAISTVVPARPV).

Belongs to the Hfq family. As to quaternary structure, homohexamer.

Its function is as follows. RNA chaperone that binds small regulatory RNA (sRNAs) and mRNAs to facilitate mRNA translational regulation in response to envelope stress, environmental stress and changes in metabolite concentrations. Also binds with high specificity to tRNAs. This chain is RNA-binding protein Hfq, found in Burkholderia ambifaria (strain ATCC BAA-244 / DSM 16087 / CCUG 44356 / LMG 19182 / AMMD) (Burkholderia cepacia (strain AMMD)).